Consider the following 417-residue polypeptide: Inhibitor of growth protein 3 (417 aa).

Disordered regions lie at residues 126–165, 177–198, and 284–320; these read LDTPSQPVNNHHVHSHSLGEKRKHNPSSHHSTTDHVSEKK, SDASKENTAGCRNNLSSSSTNN, and QTLTSSATTDSRSGRKSKSNNKSASQQSSSSSSSSSL. Basic residues predominate over residues 136-152; it reads HHVHSHSLGEKRKHNPS. Over residues 156 to 165 the composition is skewed to basic and acidic residues; it reads STTDHVSEKK. Polar residues predominate over residues 177-187; the sequence is SDASKENTAGC. Composition is skewed to low complexity over residues 189 to 198, 284 to 294, and 303 to 320; these read NNLSSSSTNN, QTLTSSATTDS, and NNKSASQQSSSSSSSSSL. Residues 359 to 408 form a PHD-type zinc finger; sequence PRYCICNQVSYGEMVGCDNQDCPIEWFHYGCVGLSEAPKGKWYCPQCTAA. Zn(2+) contacts are provided by C362, C364, C375, C380, H386, C389, C402, and C405.

Belongs to the ING family. Interacts with H3K4me3 and to a lesser extent with H3K4me2. Component of the NuA4 histone acetyltransferase complex.

It localises to the nucleus. Functionally, component of the NuA4 histone acetyltransferase (HAT) complex which is involved in transcriptional activation of select genes principally by acetylation of nucleosomal histone H4 and H2A. This modification may both alter nucleosome - DNA interactions and promote interaction of the modified histones with other proteins which positively regulate transcription. NuA4 may also play a direct role in DNA repair when directly recruited to sites of DNA damage. The sequence is that of Inhibitor of growth protein 3 (ing3) from Xenopus tropicalis (Western clawed frog).